The sequence spans 304 residues: Putative dihydroorotate dehydrogenase A (fumarate) (304 aa).

Residues Ser21 and 45–46 (KS) each bind FMN. Substrate-binding positions include Lys45, 69-73 (NAVGL), and Asn129. Asn129 contributes to the FMN binding site. The active-site Nucleophile is the Cys132. Lys168 and Ile194 together coordinate FMN. Residue 195–196 (NT) coordinates substrate. Residues Gly220, 246–247 (GG), and 268–269 (GS) each bind FMN.

The protein belongs to the dihydroorotate dehydrogenase family. Type 1 subfamily. As to quaternary structure, homodimer. FMN serves as cofactor.

Its subcellular location is the cytoplasm. It catalyses the reaction (S)-dihydroorotate + fumarate = orotate + succinate. It participates in pyrimidine metabolism; UMP biosynthesis via de novo pathway. Functionally, catalyzes the conversion of dihydroorotate to orotate with fumarate as the electron acceptor. The polypeptide is Putative dihydroorotate dehydrogenase A (fumarate) (pyrD) (Pediococcus pentosaceus (strain ATCC 25745 / CCUG 21536 / LMG 10740 / 183-1w)).